The sequence spans 632 residues: tRNA uridine 5-carboxymethylaminomethyl modification enzyme MnmG (632 aa).

Residues 15 to 20 (GAGHAG), Ile-127, and Ser-182 contribute to the FAD site. 276–290 (GPRYCPSIEDKIVRF) contributes to the NAD(+) binding site. Position 373 (Gln-373) interacts with FAD.

Belongs to the MnmG family. In terms of assembly, homodimer. Heterotetramer of two MnmE and two MnmG subunits. FAD serves as cofactor.

It localises to the cytoplasm. Its function is as follows. NAD-binding protein involved in the addition of a carboxymethylaminomethyl (cmnm) group at the wobble position (U34) of certain tRNAs, forming tRNA-cmnm(5)s(2)U34. This chain is tRNA uridine 5-carboxymethylaminomethyl modification enzyme MnmG, found in Streptococcus pyogenes serotype M3 (strain SSI-1).